The primary structure comprises 188 residues: Elongation factor P-like protein (188 aa).

Belongs to the elongation factor P family.

The polypeptide is Elongation factor P-like protein (Alcanivorax borkumensis (strain ATCC 700651 / DSM 11573 / NCIMB 13689 / SK2)).